Consider the following 138-residue polypeptide: Phosphoribosyl-AMP cyclohydrolase (138 aa).

D84 is a Mg(2+) binding site. Position 85 (C85) interacts with Zn(2+). Residues D86 and D88 each coordinate Mg(2+). Positions 102 and 109 each coordinate Zn(2+).

Belongs to the PRA-CH family. Homodimer. Mg(2+) is required as a cofactor. Requires Zn(2+) as cofactor.

Its subcellular location is the cytoplasm. It catalyses the reaction 1-(5-phospho-beta-D-ribosyl)-5'-AMP + H2O = 1-(5-phospho-beta-D-ribosyl)-5-[(5-phospho-beta-D-ribosylamino)methylideneamino]imidazole-4-carboxamide. Its pathway is amino-acid biosynthesis; L-histidine biosynthesis; L-histidine from 5-phospho-alpha-D-ribose 1-diphosphate: step 3/9. Functionally, catalyzes the hydrolysis of the adenine ring of phosphoribosyl-AMP. This is Phosphoribosyl-AMP cyclohydrolase from Burkholderia pseudomallei (strain K96243).